The primary structure comprises 104 residues: Ig lambda-3 chain C region (104 aa).

The Ig-like domain maps to 6–99 (PTLTMFPPSP…EGDTVEKSLS (94 aa)). Cysteines 27 and 85 form a disulfide.

The protein is Ig lambda-3 chain C region (Iglc3) of Mus musculus (Mouse).